Consider the following 527-residue polypeptide: Flavonoid 3',5'-hydroxylase CYP75B138 (527 aa).

Residues 6–26 form a helical membrane-spanning segment; that stretch reads LDIILFISAIVFLSIYYYNLF. Position 459 (C459) interacts with heme.

The protein belongs to the cytochrome P450 family. Heme is required as a cofactor. In terms of tissue distribution, expressed in young cromes.

It is found in the membrane. The enzyme catalyses a 3',5'-unsubstituted flavanone + 2 reduced [NADPH--hemoprotein reductase] + 2 O2 = a 3',5'-dihydroxyflavanone + 2 oxidized [NADPH--hemoprotein reductase] + 2 H2O + 2 H(+). The catalysed reaction is (2S)-naringenin + 2 reduced [NADPH--hemoprotein reductase] + 2 O2 = (2S)-dihydrotricetin + 2 oxidized [NADPH--hemoprotein reductase] + 2 H2O + 2 H(+). It carries out the reaction (2R,3R)-dihydrokaempferol + 2 reduced [NADPH--hemoprotein reductase] + 2 O2 = (2R,3R)-dihydromyricetin + 2 oxidized [NADPH--hemoprotein reductase] + 2 H2O + 2 H(+). It catalyses the reaction kaempferol + 2 reduced [NADPH--hemoprotein reductase] + 2 O2 = myricetin + 2 oxidized [NADPH--hemoprotein reductase] + 2 H2O + 2 H(+). It participates in flavonoid metabolism. Functionally, flavonoid 3',5'-hydroxylase that catalyzes the 3'- and 5'-hydroxylation of flavanones, dihydroflavonols and flavonols. Converts narigenin to dihydrotricetin, dihydrokaempferol to dihydromyricetin and kaempferol to myricetin. The polypeptide is Flavonoid 3',5'-hydroxylase CYP75B138 (Crocosmia x crocosmiiflora (Montbretia)).